Reading from the N-terminus, the 312-residue chain is Mycothiol acetyltransferase (312 aa).

N-acetyltransferase domains are found at residues 8-136 (PIIR…LPMP) and 149-301 (LRLD…HQDH). Glutamate 38 contributes to the 1D-myo-inositol 2-(L-cysteinylamino)-2-deoxy-alpha-D-glucopyranoside binding site. Acetyl-CoA-binding positions include 77 to 79 (LMV) and 85 to 90 (RQGIAT). 1D-myo-inositol 2-(L-cysteinylamino)-2-deoxy-alpha-D-glucopyranoside-binding residues include glutamate 175, lysine 215, and glutamate 226. Residues 230 to 232 (LGV) and 237 to 243 (EGKGVGR) contribute to the acetyl-CoA site. 1D-myo-inositol 2-(L-cysteinylamino)-2-deoxy-alpha-D-glucopyranoside is bound at residue tyrosine 264. Position 269–274 (269–274 (NERVVH)) interacts with acetyl-CoA. Residues 292–312 (PAKPARHQDHGRQSSPQERDA) are disordered. Over residues 297–312 (RHQDHGRQSSPQERDA) the composition is skewed to basic and acidic residues.

It belongs to the acetyltransferase family. MshD subfamily. Monomer.

It catalyses the reaction 1D-myo-inositol 2-(L-cysteinylamino)-2-deoxy-alpha-D-glucopyranoside + acetyl-CoA = mycothiol + CoA + H(+). Catalyzes the transfer of acetyl from acetyl-CoA to desacetylmycothiol (Cys-GlcN-Ins) to form mycothiol. This chain is Mycothiol acetyltransferase, found in Propionibacterium freudenreichii subsp. shermanii (strain ATCC 9614 / DSM 4902 / CIP 103027 / NCIMB 8099 / CIRM-BIA1).